We begin with the raw amino-acid sequence, 473 residues long: MRNPKSFCVVAGFVRLPKSSLGQARYYSIPNDVSIPASKRKFIPSSGTYPKGFLVAGAHAGVKESNTQFPDVALICSETPCSAAAVFTTNKFQAAPVQVSKQVLEKRQGTGIRGVVINSGCANAVTGKGGLEDAKMMSAKVDECNGTPSTGPQDTSTLVMSTGVIGQRLPIKKILDAIPTAHSNLASTHSTWLATARAICTTDTFPKLLSRTFTLPSSPNRQYCLAGMTKGAGMIHPNMATLLGILCTDVPISPSALKALLTHAVSRSFNAISIDGDTSTNDTIALLANGAAGGEAIITTSSPDYAAMQTILTSFAQSLAQLVVRDGEGATKFITVRVCNSPSHADAKVIASTIARSPLVKTALYGKDANWGRILCAIGYAQGIAEGTVVPERTSVSFRPVDGSAELKLLVNGEPEAVDEERAARILQDEDLEIVVDLGGGQKGEKGLGGEEGLYWFCDFSHEYVTINGDYRT.

Thr201, Lys230, Thr241, Glu328, Asn468, and Thr473 together coordinate substrate. Catalysis depends on Thr241, which acts as the Nucleophile.

It belongs to the ArgJ family. In terms of assembly, heterodimer of an alpha and a beta chain. Post-translationally, the alpha and beta chains are autoproteolytically processed from a single precursor protein within the mitochondrion.

It localises to the mitochondrion matrix. It catalyses the reaction N(2)-acetyl-L-ornithine + L-glutamate = N-acetyl-L-glutamate + L-ornithine. It carries out the reaction L-glutamate + acetyl-CoA = N-acetyl-L-glutamate + CoA + H(+). It participates in amino-acid biosynthesis; L-arginine biosynthesis; L-ornithine and N-acetyl-L-glutamate from L-glutamate and N(2)-acetyl-L-ornithine (cyclic): step 1/1. It functions in the pathway amino-acid biosynthesis; L-arginine biosynthesis; N(2)-acetyl-L-ornithine from L-glutamate: step 1/4. Its function is as follows. Catalyzes two activities which are involved in the cyclic version of arginine biosynthesis: the synthesis of acetylglutamate from glutamate and acetyl-CoA, and of ornithine by transacetylation between acetylornithine and glutamate. The polypeptide is Arginine biosynthesis bifunctional protein ArgJ, mitochondrial (Ajellomyces capsulatus (strain G186AR / H82 / ATCC MYA-2454 / RMSCC 2432) (Darling's disease fungus)).